The chain runs to 510 residues: MRSRRDNSWVAQKFGGTSIGKFPDKVAEIVKSARLGGDRPAVICSARSSGKKVFGTTSRLLQVYRTLRGIVAITQDPDMQELLFDRLRSIIRDIRDDQVATVQMYILRQDIRDDTIRQITADCQELLDYTSAAKRFNLDINGKAKDKMVSFGEKLSCRLMVAMLRDRDIPAEYVDLSDIVPSNNLDQLRPDFFHEAAAVFGKRVEACNGRVPVITGFFGAVPGSLIDSGIGRGYSDLCAVLVAIGLHAERVQIWKEVDGIFTADPREVPDARCLPSITPSEAAELTFYGSEVIHHLALSLAIQAKPPVSIFVKNVQKPWGQGTVVVPTDGDDTSSWPIDYLDPSDSDSTSSTALPKMPTAVTIKRDITIFNILSNKQSMSHGFFVKVFTILAEHDISVDLISTSEVHVSMAINSSNMDPSQIKNVQCRLAEEGEVNVLPDMAILSLVGAELKNMTGIAGKMFAILGEQDVNIEMISQGASEINISCVIPDKDATRALNMLHDELFTKNAI.

ACT domains are found at residues 372 to 440 (ILSN…VLPD) and 446 to 510 (LVGA…KNAI).

This sequence belongs to the aspartokinase family.

The enzyme catalyses L-aspartate + ATP = 4-phospho-L-aspartate + ADP. Its pathway is mycotoxin biosynthesis. In terms of biological role, aspartate kinase; part of the gene cluster that mediates the biosynthesis of fusaric acid, a mycotoxin with low to moderate toxicity to animals and humans, but with high phytotoxic properties. L-aspartate is suggested as fusaric acid amino acid precursor that is activated and further processed to O-acetyl-L-homoserine by cluster enzymes aspartate kinase FUB3 and homoserine O-acetyltransferase FUB5, as well as enzymes of the primary metabolism. The polyketide synthase (PKS) FUB1 generates the triketide trans-2-hexenal which is presumptively released by the hydrolase FUB4 and linked to the NRPS-bound amino acid precursor by NAD(P)-dependent dehydrogenase FUB6. FUB1, FUB4, and the non-canonical NRPS Fub8 may form an enzyme complex. Further processing of the NRPS-bound intermediate might be carried out by FUB6 and the sulfhydrylase FUB7, enabling a spontaneous electrocyclization to close the carbon backbone of fusaric acid. Dihydrofusaric acid is likely to be released via reduction by the thioester reductase (TR) domain of FUB8 whereupon the final oxidation to fusaric acid may (also) be performed by the FMN-dependent dehydrogenase FUB9. This chain is Aspartate kinase FUB3, found in Gibberella fujikuroi (strain CBS 195.34 / IMI 58289 / NRRL A-6831) (Bakanae and foot rot disease fungus).